The primary structure comprises 558 residues: Cytochrome P450 monooxygenase sdnT (558 aa).

A helical membrane pass occupies residues Ile21–Ile41. The segment at Gln298 to Pro317 is disordered. Residues Asn464 and Asn495 are each glycosylated (N-linked (GlcNAc...) asparagine). Residue Cys505 coordinates heme.

Belongs to the cytochrome P450 family. It depends on heme as a cofactor.

The protein resides in the membrane. It functions in the pathway antibiotic biosynthesis. Cytochrome P450 monooxygenase; part of the gene cluster that mediates the biosynthesis of sordarin and hypoxysordarin, glycoside antibiotics with a unique tetracyclic diterpene aglycone structure. First, the geranylgeranyl diphosphate synthase sdnC constructs GGDP from farnesyl diphosphate and isopentenyl diphosphate. The diterpene cyclase sdnA then catalyzes the cyclization of GGDP to afford cycloaraneosene. Cycloaraneosene is then hydroxylated four times by the putative cytochrome P450 monooxygenases sdnB, sdnE, sdnF and sdnH to give a hydroxylated cycloaraneosene derivative such as cycloaraneosene-8,9,13,19-tetraol. Although the order of the hydroxylations is unclear, at least C8, C9 and C13 of the cycloaraneosene skeleton are hydroxylated before the sordaricin formation. Dehydration of the 13-hydroxy group of the hydroxylated cycloaraneosene derivative might be catalyzed by an unassigned hypothetical protein such as sdnG and sdnP to construct the cyclopentadiene moiety. The FAD-dependent oxidoreductase sdnN is proposed to catalyze the oxidation at C9 of the hydroxylated cycloaraneosene derivative and also catalyze the Baeyer-Villiger oxidation to give the lactone intermediate. The presumed lactone intermediate would be hydrolyzed to give an acrolein moiety and a carboxylate moiety. Then, [4+2]cycloaddition would occur between the acrolein moiety and the cyclopentadiene moiety to give sordaricin. SdnN might also be involved in the [4+2]cycloaddition after the hypothesized oxidation to accommodate the oxidized product and prompt the [4+2]cycloaddition. GDP-6-deoxy-D-altrose may be biosynthesized from GDP-D-mannose by the putative GDP-mannose-4,6-dehydratase sdnI and the short-chain dehydrogenase sdnK. The glycosyltransferase sdnJ catalyzes the attachment of 6-deoxy-D-altrose onto the 19-hydroxy group of sordaricin to give 4'-O-demethylsordarin. The methyltransferase sdnD would complete the biosynthesis of sordarin. Sordarin can be further modified into hypoxysordarin. The unique acyl chain at the 3'-hydroxy group of hypoxysordarin would be constructed by an iterative type I PKS sdnO and the trans-acting polyketide methyltransferase sdnL. SdnL would be responsible for the introduction of an alpha-methyl group of the polyketide chain. Alternatively, the beta-lactamase-like protein sdnR might be responsible for the cleavage and transfer of the polyketide chain from the PKS sdnO to sordarin. Two putative cytochrome P450 monooxygenases, sdnQ and sdnT, might catalyze the epoxidations of the polyketide chain to complete the biosynthesis of hypoxysordarin. Transcriptional regulators sdnM and sdnS are presumably encoded for the transcriptional regulation of the expression of the sdn gene cluster. The polypeptide is Cytochrome P450 monooxygenase sdnT (Sordaria araneosa (Pleurage araneosa)).